The sequence spans 308 residues: Ribosomal RNA small subunit methyltransferase H (308 aa).

S-adenosyl-L-methionine contacts are provided by residues glycine 38–histidine 40, aspartate 58, phenylalanine 82, aspartate 99, and glutamine 106.

The protein belongs to the methyltransferase superfamily. RsmH family.

The protein resides in the cytoplasm. The catalysed reaction is cytidine(1402) in 16S rRNA + S-adenosyl-L-methionine = N(4)-methylcytidine(1402) in 16S rRNA + S-adenosyl-L-homocysteine + H(+). Its function is as follows. Specifically methylates the N4 position of cytidine in position 1402 (C1402) of 16S rRNA. This chain is Ribosomal RNA small subunit methyltransferase H, found in Acidovorax ebreus (strain TPSY) (Diaphorobacter sp. (strain TPSY)).